The following is a 475-amino-acid chain: Ribulose bisphosphate carboxylase large chain (475 aa).

Residues 1 to 2 constitute a propeptide that is removed on maturation; it reads MA. Residue Pro3 is modified to N-acetylproline. Lys14 is modified (N6,N6,N6-trimethyllysine). Asn123 and Thr173 together coordinate substrate. The active-site Proton acceptor is the Lys175. Lys177 lines the substrate pocket. Mg(2+) is bound by residues Lys201, Asp203, and Glu204. Lys201 is modified (N6-carboxylysine). His294 serves as the catalytic Proton acceptor. Positions 295, 327, and 379 each coordinate substrate.

This sequence belongs to the RuBisCO large chain family. Type I subfamily. Heterohexadecamer of 8 large chains and 8 small chains; disulfide-linked. The disulfide link is formed within the large subunit homodimers. Requires Mg(2+) as cofactor. In terms of processing, the disulfide bond which can form in the large chain dimeric partners within the hexadecamer appears to be associated with oxidative stress and protein turnover.

It localises to the plastid. It is found in the chloroplast. It catalyses the reaction 2 (2R)-3-phosphoglycerate + 2 H(+) = D-ribulose 1,5-bisphosphate + CO2 + H2O. It carries out the reaction D-ribulose 1,5-bisphosphate + O2 = 2-phosphoglycolate + (2R)-3-phosphoglycerate + 2 H(+). Functionally, ruBisCO catalyzes two reactions: the carboxylation of D-ribulose 1,5-bisphosphate, the primary event in carbon dioxide fixation, as well as the oxidative fragmentation of the pentose substrate in the photorespiration process. Both reactions occur simultaneously and in competition at the same active site. The protein is Ribulose bisphosphate carboxylase large chain of Oedogonium cardiacum (Filamentous green alga).